Reading from the N-terminus, the 124-residue chain is Fluoride-specific ion channel FluC 1 (124 aa).

The next 4 membrane-spanning stretches (helical) occupy residues 7-27, 35-55, 63-83, and 101-121; these read ALTLAAAGAGSVLRYLLGGWV, FPWGTLAVNALGCLGLGLLQG, LLLVLGSGLLAGFTTFSTLML, and IVGTLALGLFALSAGARAGAW.

Belongs to the fluoride channel Fluc/FEX (TC 1.A.43) family.

The protein localises to the cell membrane. The enzyme catalyses fluoride(in) = fluoride(out). In terms of biological role, fluoride-specific ion channel. Important for reducing fluoride concentration in the cell, thus reducing its toxicity. The sequence is that of Fluoride-specific ion channel FluC 1 from Rubrobacter xylanophilus (strain DSM 9941 / JCM 11954 / NBRC 16129 / PRD-1).